The chain runs to 139 residues: uncharacterized protein (139 aa).

The signal sequence occupies residues 1-32; the sequence is MEFHDDKKNELQKKEEIITEAIDTLFQSSAFG. Residues 44–139 form the sHSP domain; that stretch reads SSLKDVQTTI…TLFFPKNKHE (96 aa).

This sequence belongs to the small heat shock protein (HSP20) family.

This is an uncharacterized protein from Bacillus subtilis (strain 168).